We begin with the raw amino-acid sequence, 304 residues long: Sulfate adenylyltransferase subunit 2 (304 aa).

It belongs to the PAPS reductase family. CysD subfamily. Heterodimer composed of CysD, the smaller subunit, and CysNC.

The enzyme catalyses sulfate + ATP + H(+) = adenosine 5'-phosphosulfate + diphosphate. The protein operates within sulfur metabolism; hydrogen sulfide biosynthesis; sulfite from sulfate: step 1/3. Functionally, with CysN forms the ATP sulfurylase (ATPS) that catalyzes the adenylation of sulfate producing adenosine 5'-phosphosulfate (APS) and diphosphate, the first enzymatic step in sulfur assimilation pathway. APS synthesis involves the formation of a high-energy phosphoric-sulfuric acid anhydride bond driven by GTP hydrolysis by CysN coupled to ATP hydrolysis by CysD. This Xylella fastidiosa (strain 9a5c) protein is Sulfate adenylyltransferase subunit 2.